Here is a 202-residue protein sequence, read N- to C-terminus: Mitochondrial import receptor subunit TOM20-3 (202 aa).

Methionine 1 is subject to N-acetylmethionine. The Cytoplasmic segment spans residues 1 to 174 (MDTETEFDRI…NKKSSDAKYD (174 aa)). TPR repeat units follow at residues 38 to 74 (GGVL…DPKK) and 86 to 119 (TSFA…QPDN). A disordered region spans residues 146 to 166 (SQPMGRVEAPAPPSSKAVKNK). The helical transmembrane segment at 175–192 (AMGWVILAIGVVAWISFA) threads the bilayer. Residues 193–202 (KANVPVSPPR) are Mitochondrial intermembrane-facing.

It belongs to the Tom20 family. As to quaternary structure, forms part of the preprotein translocase complex of the outer mitochondrial membrane (TOM complex) which consists of at least 6 different proteins (TOM5, TOM6, TOM7, TOM20, TOM22/TOM9 and TOM40). Component of a mitochondrial large protein complex that contains, at least, MIC60, DGS1, TOM40, TOM20 proteins, and petC/RISP. In terms of processing, the N-terminus is blocked. As to expression, expressed in roots, flowers, young cotyledons and leaves.

The protein resides in the mitochondrion outer membrane. In terms of biological role, central component of the receptor complex responsible for the recognition and translocation of cytosolically synthesized mitochondrial preproteins. Together with TOM22 functions as the transit peptide receptor at the surface of the mitochondrion outer membrane and facilitates the movement of preproteins into the translocation pore. The chain is Mitochondrial import receptor subunit TOM20-3 from Arabidopsis thaliana (Mouse-ear cress).